Reading from the N-terminus, the 677-residue chain is Methionine--tRNA ligase (677 aa).

The 'HIGH' region motif lies at 15 to 25 (PYANGSIHLGH). Positions 146, 149, 159, and 162 each coordinate Zn(2+). Residues 333–337 (KMSKS) carry the 'KMSKS' region motif. Lysine 336 contributes to the ATP binding site. Residues 575-677 (DFAKVDLRVA…AGAKPGHQVK (103 aa)) form the tRNA-binding domain.

Belongs to the class-I aminoacyl-tRNA synthetase family. MetG type 1 subfamily. As to quaternary structure, homodimer. Requires Zn(2+) as cofactor.

It is found in the cytoplasm. The enzyme catalyses tRNA(Met) + L-methionine + ATP = L-methionyl-tRNA(Met) + AMP + diphosphate. Functionally, is required not only for elongation of protein synthesis but also for the initiation of all mRNA translation through initiator tRNA(fMet) aminoacylation. The protein is Methionine--tRNA ligase of Shigella flexneri serotype 5b (strain 8401).